The primary structure comprises 265 residues: Cell division protein DivIB (265 aa).

At 1–33 (MRMELKMMGNVNKSNKTNEYILRRHKKKRKKKL) the chain is on the cytoplasmic side. Residues 34–54 (IIFSILLISILVTLCFKHPFF) form a helical membrane-spanning segment. The POTRA domain occupies 54–122 (FNVKIVEVKD…NKIVIHIKER (69 aa)). Topologically, residues 55–265 (NVKIVEVKDN…FKGNPVVFIK (211 aa)) are extracellular.

Belongs to the FtsQ/DivIB family. DivIB subfamily.

The protein localises to the cell membrane. Its function is as follows. Cell division protein that may be involved in stabilizing or promoting the assembly of the division complex. This chain is Cell division protein DivIB, found in Clostridium tetani (strain Massachusetts / E88).